The following is a 204-amino-acid chain: Urease accessory protein UreG (204 aa).

Residue 12–19 coordinates GTP; that stretch reads GPVGSGKT.

Belongs to the SIMIBI class G3E GTPase family. UreG subfamily. Homodimer. UreD, UreF and UreG form a complex that acts as a GTP-hydrolysis-dependent molecular chaperone, activating the urease apoprotein by helping to assemble the nickel containing metallocenter of UreC. The UreE protein probably delivers the nickel.

The protein resides in the cytoplasm. Facilitates the functional incorporation of the urease nickel metallocenter. This process requires GTP hydrolysis, probably effectuated by UreG. The protein is Urease accessory protein UreG of Pseudomonas fluorescens (strain Pf0-1).